The following is a 253-amino-acid chain: Mitochondrial inner membrane protease ATP23 (253 aa).

Residues Met-1–Lys-23 are disordered. Residues Glu-14–Lys-23 are compositionally biased toward basic and acidic residues. His-152 is a binding site for a divalent metal cation. Residue Glu-153 is part of the active site. His-156 serves as a coordination point for a divalent metal cation.

It belongs to the peptidase M76 family.

It localises to the mitochondrion inner membrane. Has a dual role in the assembly of mitochondrial ATPase. Acts as a protease that removes N-terminal residues of mitochondrial ATPase CF(0) subunit 6 at the intermembrane space side. Also involved in the correct assembly of the membrane-embedded ATPase CF(0) particle, probably mediating association of subunit 6 with the subunit 9 ring. The sequence is that of Mitochondrial inner membrane protease ATP23 (ATP23) from Vanderwaltozyma polyspora (strain ATCC 22028 / DSM 70294 / BCRC 21397 / CBS 2163 / NBRC 10782 / NRRL Y-8283 / UCD 57-17) (Kluyveromyces polysporus).